The sequence spans 485 residues: Glutamyl-tRNA(Gln) amidotransferase subunit A (485 aa).

Residues Lys-79 and Ser-154 each act as charge relay system in the active site. Ser-178 acts as the Acyl-ester intermediate in catalysis.

The protein belongs to the amidase family. GatA subfamily. Heterotrimer of A, B and C subunits.

It catalyses the reaction L-glutamyl-tRNA(Gln) + L-glutamine + ATP + H2O = L-glutaminyl-tRNA(Gln) + L-glutamate + ADP + phosphate + H(+). In terms of biological role, allows the formation of correctly charged Gln-tRNA(Gln) through the transamidation of misacylated Glu-tRNA(Gln) in organisms which lack glutaminyl-tRNA synthetase. The reaction takes place in the presence of glutamine and ATP through an activated gamma-phospho-Glu-tRNA(Gln). The polypeptide is Glutamyl-tRNA(Gln) amidotransferase subunit A (Staphylococcus aureus (strain MW2)).